The sequence spans 136 residues: Transcription antitermination protein NusB (136 aa).

This sequence belongs to the NusB family.

Its function is as follows. Involved in transcription antitermination. Required for transcription of ribosomal RNA (rRNA) genes. Binds specifically to the boxA antiterminator sequence of the ribosomal RNA (rrn) operons. The protein is Transcription antitermination protein NusB of Salinispora arenicola (strain CNS-205).